Consider the following 280-residue polypeptide: Acetyl-coenzyme A carboxylase carboxyl transferase subunit beta (280 aa).

In terms of domain architecture, CoA carboxyltransferase N-terminal spans 26-280 (LWQKCPRCGE…TKLLAWHSQK (255 aa)). C30, C33, C49, and C52 together coordinate Zn(2+). The C4-type zinc finger occupies 30-52 (CPRCGEIIFNKELEKNFKVCPKC).

It belongs to the AccD/PCCB family. Acetyl-CoA carboxylase is a heterohexamer composed of biotin carboxyl carrier protein (AccB), biotin carboxylase (AccC) and two subunits each of ACCase subunit alpha (AccA) and ACCase subunit beta (AccD). Requires Zn(2+) as cofactor.

It localises to the cytoplasm. It catalyses the reaction N(6)-carboxybiotinyl-L-lysyl-[protein] + acetyl-CoA = N(6)-biotinyl-L-lysyl-[protein] + malonyl-CoA. The protein operates within lipid metabolism; malonyl-CoA biosynthesis; malonyl-CoA from acetyl-CoA: step 1/1. In terms of biological role, component of the acetyl coenzyme A carboxylase (ACC) complex. Biotin carboxylase (BC) catalyzes the carboxylation of biotin on its carrier protein (BCCP) and then the CO(2) group is transferred by the transcarboxylase to acetyl-CoA to form malonyl-CoA. This is Acetyl-coenzyme A carboxylase carboxyl transferase subunit beta from Carboxydothermus hydrogenoformans (strain ATCC BAA-161 / DSM 6008 / Z-2901).